The following is a 272-amino-acid chain: Acetylglutamate kinase (272 aa).

Residues 41-42, Arg-63, and Asn-166 contribute to the substrate site; that span reads GG.

Belongs to the acetylglutamate kinase family. ArgB subfamily.

The protein localises to the cytoplasm. The catalysed reaction is N-acetyl-L-glutamate + ATP = N-acetyl-L-glutamyl 5-phosphate + ADP. It participates in amino-acid biosynthesis; L-arginine biosynthesis; N(2)-acetyl-L-ornithine from L-glutamate: step 2/4. In terms of biological role, catalyzes the ATP-dependent phosphorylation of N-acetyl-L-glutamate. The sequence is that of Acetylglutamate kinase from Anaeromyxobacter dehalogenans (strain 2CP-1 / ATCC BAA-258).